The following is a 443-amino-acid chain: MQVTETLNEGLKRGYNIVVSAAELDAKVNEKLVEAQPEIEMKGFRKGKVPMALLKKQFGQRLLGEAMQETIDGAMNKHFEDSGDRPALQPEVKMTNEDWKEGDDVEVAMSYEALPAIPEVDMSDIALEKLVVKADDAAIDEALGNLAETAQDFKARRKGSKAKDGDQVVMDFVGKVDGEAFEGGSAEDYPLVLGSNSFIPGFEEQLVGVKAEEEKDVTVTFPEEYGAEHLAGKEAVFTCTIKEVKEPVAAEIDDELAKKFGAEDLAALKSQIAERLEAEYAGASRAVMKRGLLDALDAKVSFDLPPSLVDAEAKQIAHQLWHEENPEVHDHNHGEIEATEEHTKLAERRVRLGLLLAELGQKAEVEVTDAEMTQAILGQARQYPGQERQFFEFVQKNPQMQQQLRAPIFEDKVVDHIVAQAKVTEKEISKDDLQKALEALDAE.

The region spanning 165-250 (GDQVVMDFVG…IKEVKEPVAA (86 aa)) is the PPIase FKBP-type domain.

It belongs to the FKBP-type PPIase family. Tig subfamily.

It is found in the cytoplasm. The catalysed reaction is [protein]-peptidylproline (omega=180) = [protein]-peptidylproline (omega=0). Functionally, involved in protein export. Acts as a chaperone by maintaining the newly synthesized protein in an open conformation. Functions as a peptidyl-prolyl cis-trans isomerase. This chain is Trigger factor, found in Ruegeria pomeroyi (strain ATCC 700808 / DSM 15171 / DSS-3) (Silicibacter pomeroyi).